The primary structure comprises 110 residues: Ig kappa chain V region 3547 (110 aa).

The framework-1 stretch occupies residues 1–23 (AYDMTQTPSSVSAAVGGTVTINC). A complementarity-determining-1 region spans residues 24-34 (QASEDISANLA). Residues 35 to 49 (WYQQKPGQPPKLLIY) form a framework-2 region. The tract at residues 50–56 (AASDLAS) is complementarity-determining-2. The framework-3 stretch occupies residues 57 to 88 (GVPSRFKGSGSGTEYTLTISGVQCADAATYYC). The tract at residues 89 to 99 (QSADYSGSAVT) is complementarity-determining-3. The interval 100–109 (FGGGTEVVVK) is framework-4.

This is Ig kappa chain V region 3547 from Oryctolagus cuniculus (Rabbit).